A 369-amino-acid polypeptide reads, in one-letter code: Tetraacyldisaccharide 4'-kinase (369 aa).

68–75 (VVGGTGKT) contacts ATP.

Belongs to the LpxK family.

It catalyses the reaction a lipid A disaccharide + ATP = a lipid IVA + ADP + H(+). Its pathway is glycolipid biosynthesis; lipid IV(A) biosynthesis; lipid IV(A) from (3R)-3-hydroxytetradecanoyl-[acyl-carrier-protein] and UDP-N-acetyl-alpha-D-glucosamine: step 6/6. Transfers the gamma-phosphate of ATP to the 4'-position of a tetraacyldisaccharide 1-phosphate intermediate (termed DS-1-P) to form tetraacyldisaccharide 1,4'-bis-phosphate (lipid IVA). The polypeptide is Tetraacyldisaccharide 4'-kinase (Chlamydia trachomatis serovar D (strain ATCC VR-885 / DSM 19411 / UW-3/Cx)).